Consider the following 414-residue polypeptide: Multifunctional CCA protein (414 aa).

Residues G8 and R11 each coordinate ATP. The CTP site is built by G8 and R11. Residues D21 and D23 each contribute to the Mg(2+) site. 3 residues coordinate ATP: R91, R137, and R140. CTP contacts are provided by R91, R137, and R140. The 102-residue stretch at T228–W329 folds into the HD domain.

The protein belongs to the tRNA nucleotidyltransferase/poly(A) polymerase family. Bacterial CCA-adding enzyme type 1 subfamily. In terms of assembly, monomer. Can also form homodimers and oligomers. The cofactor is Mg(2+). Requires Ni(2+) as cofactor.

The catalysed reaction is a tRNA precursor + 2 CTP + ATP = a tRNA with a 3' CCA end + 3 diphosphate. The enzyme catalyses a tRNA with a 3' CCA end + 2 CTP + ATP = a tRNA with a 3' CCACCA end + 3 diphosphate. Its function is as follows. Catalyzes the addition and repair of the essential 3'-terminal CCA sequence in tRNAs without using a nucleic acid template. Adds these three nucleotides in the order of C, C, and A to the tRNA nucleotide-73, using CTP and ATP as substrates and producing inorganic pyrophosphate. tRNA 3'-terminal CCA addition is required both for tRNA processing and repair. Also involved in tRNA surveillance by mediating tandem CCA addition to generate a CCACCA at the 3' terminus of unstable tRNAs. While stable tRNAs receive only 3'-terminal CCA, unstable tRNAs are marked with CCACCA and rapidly degraded. In Edwardsiella ictaluri (strain 93-146), this protein is Multifunctional CCA protein.